A 291-amino-acid chain; its full sequence is N-acetylmannosamine kinase (291 aa).

Residues 5-12 (AIDIGGTK) and 132-139 (GVGGGVVS) each bind ATP. Residues His-156, Cys-166, Cys-168, and Cys-173 each coordinate Zn(2+).

Belongs to the ROK (NagC/XylR) family. NanK subfamily. Homodimer.

The enzyme catalyses an N-acyl-D-mannosamine + ATP = an N-acyl-D-mannosamine 6-phosphate + ADP + H(+). Its pathway is amino-sugar metabolism; N-acetylneuraminate degradation; D-fructose 6-phosphate from N-acetylneuraminate: step 2/5. Its function is as follows. Catalyzes the phosphorylation of N-acetylmannosamine (ManNAc) to ManNAc-6-P. In Shigella boydii serotype 18 (strain CDC 3083-94 / BS512), this protein is N-acetylmannosamine kinase.